A 288-amino-acid polypeptide reads, in one-letter code: UTP--glucose-1-phosphate uridylyltransferase (288 aa).

The protein belongs to the UDPGP type 2 family.

It catalyses the reaction alpha-D-glucose 1-phosphate + UTP + H(+) = UDP-alpha-D-glucose + diphosphate. Its pathway is glycolipid metabolism; diglucosyl-diacylglycerol biosynthesis. Catalyzes the formation of UDP-glucose from glucose-1-phosphate and UTP. This is an intermediate step in the biosynthesis of diglucosyl-diacylglycerol (Glc2-DAG), i.e. the predominant glycolipid found in the S.aureus membrane, which is also used as a membrane anchor for lipoteichoic acid (LTA). This chain is UTP--glucose-1-phosphate uridylyltransferase (gtaB), found in Staphylococcus aureus (strain MSSA476).